We begin with the raw amino-acid sequence, 1049 residues long: Self-sufficient cytochrome P450 monooxygenase CYP505E4 (1049 aa).

Position 405 (C405) interacts with heme. The tract at residues 462–492 is disordered; that stretch reads ATALSQHNMSAGATSSPGSSAHPAGNKNAQD. Positions 471 to 486 are enriched in low complexity; the sequence is SAGATSSPGSSAHPAG. The 142-residue stretch at 499–640 folds into the Flavodoxin-like domain; that stretch reads ISFFYGSNSG…DLEVWEETNL (142 aa). FMN is bound by residues 505–509 and 584–616; these read SNSGT and VFGC…TRLT. The FAD-binding FR-type domain occupies 678 to 906; that stretch reads RDLIEGKVTA…RPAKEAFHLP (229 aa).

This sequence in the N-terminal section; belongs to the cytochrome P450 family. The cofactor is FAD. FMN serves as cofactor. It depends on heme as a cofactor.

The enzyme catalyses 2 oxidized [cytochrome P450] + NADPH = 2 reduced [cytochrome P450] + NADP(+) + H(+). It carries out the reaction an organic molecule + reduced [NADPH--hemoprotein reductase] + O2 = an alcohol + oxidized [NADPH--hemoprotein reductase] + H2O + H(+). The catalysed reaction is dodecanoate + reduced [NADPH--hemoprotein reductase] + O2 = 5-hydroxydodecanoate + oxidized [NADPH--hemoprotein reductase] + H2O + H(+). It catalyses the reaction tetradecanoate + reduced [NADPH--hemoprotein reductase] + O2 = 7-hydroxytetradecanoate + oxidized [NADPH--hemoprotein reductase] + H2O + H(+). The enzyme catalyses dodecan-1-ol + reduced [NADPH--hemoprotein reductase] + O2 = 1,5-dodecanediol + oxidized [NADPH--hemoprotein reductase] + H2O + H(+). It carries out the reaction dodecan-1-ol + reduced [NADPH--hemoprotein reductase] + O2 = 1,4-dodecanediol + oxidized [NADPH--hemoprotein reductase] + H2O + H(+). The catalysed reaction is dodecan-1-ol + reduced [NADPH--hemoprotein reductase] + O2 = 1,6-dodecanediol + oxidized [NADPH--hemoprotein reductase] + H2O + H(+). Functionally, self-sufficient cytochrome P450 monooxygenase that catalyzes the regioselective in-chain hydroxylation of alkanes, fatty alcohols, and fatty acids at the omega-7 position. Performs hydroxylation of C10-C16 n-alkanes and C12 and C14 fatty alcohols; and thereby enables the one step biocatalytic synthesis of rare alcohols such as 5-dodecanol and 7-tetradecanol. Converts 1-dodecanol into 1,5-dodecanediol as major product with very little sub-terminally hydroxylated products with the 1,4-dodecanediol and 1,6-dodecanediol more abundant. Converts dodecanoic acid to 5-hydroxydodecanoic acid which can be further converted into delta-dodecalactone by lactonization of the 5-hydroxy acid at low pH. Also gives sub-terminal hydroxylation of dodecanoic acid with 9-hydroxydodecanoic acid being the second most abundant product. This is Self-sufficient cytochrome P450 monooxygenase CYP505E4 from Penicillium freii.